The chain runs to 335 residues: 2-acylglycerol O-acyltransferase 2-A (335 aa).

Helical transmembrane passes span Trp-24–Phe-44 and Phe-47–Lys-67.

It belongs to the diacylglycerol acyltransferase family.

It is found in the endoplasmic reticulum membrane. Its subcellular location is the cytoplasm. The protein resides in the perinuclear region. The enzyme catalyses a 2-acylglycerol + an acyl-CoA = a 1,2-diacylglycerol + CoA. The catalysed reaction is a 2-acylglycerol + an acyl-CoA = a 1,2-diacyl-sn-glycerol + CoA. It catalyses the reaction a 2-acylglycerol + an acyl-CoA = a 2,3-diacyl-sn-glycerol + CoA. It carries out the reaction a 1-acylglycerol + an acyl-CoA = a 1,2-diacylglycerol + CoA. The enzyme catalyses a 1-acylglycerol + an acyl-CoA = a 1,3-diacylglycerol + CoA. The catalysed reaction is 1-O-alkylglycerol + an acyl-CoA = 1-O-alkyl-3-acylglycerol + CoA. It catalyses the reaction an acyl-CoA + a 1,2-diacyl-sn-glycerol = a triacyl-sn-glycerol + CoA. Its pathway is glycerolipid metabolism; triacylglycerol biosynthesis. Functionally, catalyzes the formation of diacylglycerol from 2-monoacylglycerol and fatty acyl-CoA. Involved in glycerolipid synthesis and lipid metabolism. Catalyzes the formation of diacylglycerol, the precursor of triacylglycerol, by transferring the acyl chain of a fatty acyl-CoA to a monoacylglycerol. Plays a central role in absorption of dietary fat in the small intestine by catalyzing the resynthesis of triacylglycerol in enterocytes. Has a preference toward monoacylglycerols containing unsaturated fatty acids in an order of C18:3 &gt; C18:2 &gt; C18:1 &gt; C18:0 at sn-2. Able to use 1-monoalkylglycerol (1-MAkG, 1-O-alkylglycerol) as an acyl acceptor for the synthesis of monoalkyl-monoacylglycerol (MAMAG, 1-O-alkyl-3-acylglycerol or 1-O-alkyl-2-acylglycerol) and subsequently, with lower efficiency, may add another acyl chain producing monoalkyl-diacylglycerol (MADAG, 1-O-alkyl-2,3-diacylglycerol). Possesses weak but significant activity with diacylglycerol as substrate, producing triacylglycerol (triacyl-sn-glycerol). The polypeptide is 2-acylglycerol O-acyltransferase 2-A (mogat2-a) (Xenopus laevis (African clawed frog)).